The sequence spans 347 residues: UDP-N-acetylglucosamine--N-acetylmuramyl-(pentapeptide) pyrophosphoryl-undecaprenol N-acetylglucosamine transferase (347 aa).

UDP-N-acetyl-alpha-D-glucosamine is bound by residues 11–13, N122, R163, S189, and Q279; that span reads TGG.

This sequence belongs to the glycosyltransferase 28 family. MurG subfamily.

Its subcellular location is the cell inner membrane. The enzyme catalyses di-trans,octa-cis-undecaprenyl diphospho-N-acetyl-alpha-D-muramoyl-L-alanyl-D-glutamyl-meso-2,6-diaminopimeloyl-D-alanyl-D-alanine + UDP-N-acetyl-alpha-D-glucosamine = di-trans,octa-cis-undecaprenyl diphospho-[N-acetyl-alpha-D-glucosaminyl-(1-&gt;4)]-N-acetyl-alpha-D-muramoyl-L-alanyl-D-glutamyl-meso-2,6-diaminopimeloyl-D-alanyl-D-alanine + UDP + H(+). Its pathway is cell wall biogenesis; peptidoglycan biosynthesis. Its function is as follows. Cell wall formation. Catalyzes the transfer of a GlcNAc subunit on undecaprenyl-pyrophosphoryl-MurNAc-pentapeptide (lipid intermediate I) to form undecaprenyl-pyrophosphoryl-MurNAc-(pentapeptide)GlcNAc (lipid intermediate II). The sequence is that of UDP-N-acetylglucosamine--N-acetylmuramyl-(pentapeptide) pyrophosphoryl-undecaprenol N-acetylglucosamine transferase from Sulfurihydrogenibium sp. (strain YO3AOP1).